We begin with the raw amino-acid sequence, 146 residues long: Hemoglobin subunit beta (146 aa).

The 145-residue stretch at 2–146 folds into the Globin domain; the sequence is FLTAEEKGLV…VASALAHRYH (145 aa). Ser44 carries the post-translational modification Phosphoserine. Lys59 bears the N6-acetyllysine mark. His63 contacts heme b. Lys82 carries the post-translational modification N6-acetyllysine. Heme b is bound at residue His92. S-nitrosocysteine is present on Cys93.

It belongs to the globin family. In terms of assembly, heterotetramer of two alpha chains and two beta chains. Red blood cells.

Functionally, involved in oxygen transport from the lung to the various peripheral tissues. The chain is Hemoglobin subunit beta (HBB) from Paguma larvata (Masked palm civet).